Reading from the N-terminus, the 344-residue chain is Galactoside alpha-(1,2)-fucosyltransferase 2 (344 aa).

At 1–7 (MFSTQTF) the chain is on the cytoplasmic side. A helical; Signal-anchor for type II membrane protein membrane pass occupies residues 8-28 (FFFPTAPFILFVFTASTIFHL). At 29-344 (HQRLEKMQPT…PADLSPLLKH (316 aa)) the chain is on the lumenal side. 4 N-linked (GlcNAc...) asparagine glycosylation sites follow: Asn-189, Asn-255, Asn-283, and Asn-309.

In terms of tissue distribution, expressed in brain, heart, lung, intestin and kidney.

The protein resides in the golgi apparatus. It is found in the golgi stack membrane. It carries out the reaction a beta-D-galactosyl-(1-&gt;3)-N-acetyl-beta-D-glucosaminyl derivative + GDP-beta-L-fucose = an alpha-L-Fuc-(1-&gt;2)-beta-D-Gal-(1-&gt;3)-beta-D-GlcNAc derivative + GDP + H(+). It catalyses the reaction a beta-D-galactosyl-(1-&gt;4)-N-acetyl-beta-D-glucosaminyl derivative + GDP-beta-L-fucose = an alpha-L-Fuc-(1-&gt;2)-beta-D-Gal-(1-&gt;4)-beta-D-GlcNAc derivative + GDP + H(+). The enzyme catalyses a ganglioside GM1 + GDP-beta-L-fucose = a ganglioside Fuc-GM1 + GDP + H(+). The catalysed reaction is a neolactoside nLc4Cer + GDP-beta-L-fucose = a neolactoside IV(2)-alpha-Fuc-nLc4Cer + GDP + H(+). It carries out the reaction a neolactoside nLc4Cer(d18:1(4E)) + GDP-beta-L-fucose = a neolactoside IV(2)-alpha-Fuc-nLc4Cer(d18:1(4E)) + GDP + H(+). It catalyses the reaction a ganglioside GA1 + GDP-beta-L-fucose = a ganglioside Fuc-GA1 + GDP + H(+). The enzyme catalyses Lc4Cer + GDP-beta-L-fucose = alpha-L-fucosyl-(1-&gt;2)-beta-D-galactosyl-(1-&gt;3)-N-acetyl-beta-D-glucosaminyl-(1-&gt;3)-beta-D-galactosyl-(1-&gt;4)-beta-D-glucosyl-(1&lt;-&gt;1')-ceramide + GDP + H(+). The catalysed reaction is a beta-D-Gal-(1-&gt;3)-beta-D-GlcNAc-(1-&gt;3)-beta-D-Gal-(1-&gt;4)-beta-D-Glc-(1&lt;-&gt;1')-Cer(d18:1(4E)) + GDP-beta-L-fucose = alpha-L-fucosyl-(1-&gt;2)- beta-D-galactosyl-(1-&gt;3)-N-acetyl-beta-D-glucosaminyl-(1-&gt;3)-beta-D-galactosyl-(1-&gt;4)-beta-D-glucosyl-(1&lt;-&gt;1')-N-acylsphing-4-enine + GDP + H(+). It carries out the reaction a ganglioside GD1b + GDP-beta-L-fucose = a ganglioside Fuc-GD1b + GDP + H(+). It catalyses the reaction a ganglioside GM1 (d18:1(4E)) + GDP-beta-L-fucose = a ganglioside Fuc-GM1 (d18:1(4E)) + GDP + H(+). The enzyme catalyses a globoside GalGb4Cer (d18:1(4E)) + GDP-beta-L-fucose = a globoside Globo-H (d18:1(4E)) + GDP + H(+). The catalysed reaction is a lactoside III(4)-a-Fuc-Lc4Cer + GDP-beta-L-fucose = a lactoside IV(2),III(4)-a-[Fuc]2-Lc4Cer + GDP + H(+). It carries out the reaction beta-D-galactosyl-(1-&gt;3)-N-acetyl-D-galactosamine + GDP-beta-L-fucose = alpha-L-fucosyl-(1-&gt;2)-beta-D-galactosyl-(1-&gt;3)-N-acetyl-D-galactosamine + GDP + H(+). It participates in protein modification; protein glycosylation. In terms of biological role, catalyzes the transfer of L-fucose, from a guanosine diphosphate-beta-L-fucose, to the terminal galactose on both O- and N-linked glycans chains of cell surface glycoproteins and glycolipids and the resulting epitope regulates several processes such as cell-cell interaction including host-microbe interaction, cell surface expression and cell proliferation. Preferentially fucosylates gangliosides GA1 and GM1 in the antrum, cecum and colon and in the female reproductive organs. Fucosylated host glycoproteins or glycolipids mediate interaction with intestinal microbiota influencing its composition. Creates a soluble precursor oligosaccharide FuC-alpha ((1,2)Galbeta-) called the H antigen which is an essential substrate for the final step in the soluble ABO blood group antigen synthesis pathway. The chain is Galactoside alpha-(1,2)-fucosyltransferase 2 from Bos taurus (Bovine).